The chain runs to 153 residues: Riboflavin synthase (153 aa).

This sequence belongs to the DMRL synthase family.

The catalysed reaction is 2 6,7-dimethyl-8-(1-D-ribityl)lumazine + H(+) = 5-amino-6-(D-ribitylamino)uracil + riboflavin. It participates in cofactor biosynthesis; riboflavin biosynthesis; riboflavin from 2-hydroxy-3-oxobutyl phosphate and 5-amino-6-(D-ribitylamino)uracil: step 2/2. The chain is Riboflavin synthase (ribC) from Archaeoglobus fulgidus (strain ATCC 49558 / DSM 4304 / JCM 9628 / NBRC 100126 / VC-16).